The chain runs to 1997 residues: Autophagy-related protein 2 homolog A (1997 aa).

Residues 17-119 (CRYLLQHYLG…RGAAQGTESQ (103 aa)) enclose the Chorein N-terminal domain. 5 disordered regions span residues 241-281 (TSVQ…IQQI), 1292-1323 (HCPP…CLPA), 1371-1414 (EEIK…TDTD), 1492-1534 (SSRP…TQGG), and 1684-1718 (RLDG…SSTD). Residues 1311–1321 (PEGPSSLPPCL) show a composition bias toward pro residues. Polar residues-rich tracts occupy residues 1393–1408 (RVSQ…SGDS), 1493–1532 (SRPN…WRTQ), and 1690–1718 (KSSS…SSTD).

The protein belongs to the ATG2 family.

The protein localises to the preautophagosomal structure membrane. The protein resides in the lipid droplet. It is found in the endoplasmic reticulum membrane. It catalyses the reaction a 1,2-diacyl-sn-glycero-3-phospho-L-serine(in) = a 1,2-diacyl-sn-glycero-3-phospho-L-serine(out). The catalysed reaction is a 1,2-diacyl-sn-glycero-3-phosphoethanolamine(in) = a 1,2-diacyl-sn-glycero-3-phosphoethanolamine(out). Functionally, lipid transfer protein involved in autophagosome assembly. Tethers the edge of the isolation membrane (IM) to the endoplasmic reticulum (ER) and mediates direct lipid transfer from ER to IM for IM expansion. Binds to the ER exit site (ERES), which is the membrane source for autophagosome formation, and extracts phospholipids from the membrane source and transfers them to atg9 (atg9a or atg9b) to the IM for membrane expansion. Also regulates lipid droplets morphology and distribution within the cell. In Xenopus tropicalis (Western clawed frog), this protein is Autophagy-related protein 2 homolog A.